The primary structure comprises 431 residues: NADH-quinone oxidoreductase subunit D 2 (431 aa).

The interval 1–37 (MSEAKGVGGIDPRATPGSAGAGERPPMGTLSPRAGEG) is disordered.

Belongs to the complex I 49 kDa subunit family. NDH-1 is composed of 14 different subunits. Subunits NuoB, C, D, E, F, and G constitute the peripheral sector of the complex.

The protein resides in the cell inner membrane. The catalysed reaction is a quinone + NADH + 5 H(+)(in) = a quinol + NAD(+) + 4 H(+)(out). Functionally, NDH-1 shuttles electrons from NADH, via FMN and iron-sulfur (Fe-S) centers, to quinones in the respiratory chain. The immediate electron acceptor for the enzyme in this species is believed to be ubiquinone. Couples the redox reaction to proton translocation (for every two electrons transferred, four hydrogen ions are translocated across the cytoplasmic membrane), and thus conserves the redox energy in a proton gradient. This is NADH-quinone oxidoreductase subunit D 2 from Anaeromyxobacter sp. (strain K).